A 116-amino-acid polypeptide reads, in one-letter code: NADPH-dependent 7-cyano-7-deazaguanine reductase (116 aa).

Cysteine 31 serves as the catalytic Thioimide intermediate. Aspartate 38 acts as the Proton donor in catalysis. Residues 53–55 (VEL) and 72–73 (YE) contribute to the substrate site.

Belongs to the GTP cyclohydrolase I family. QueF type 1 subfamily.

It is found in the cytoplasm. It carries out the reaction 7-aminomethyl-7-carbaguanine + 2 NADP(+) = 7-cyano-7-deazaguanine + 2 NADPH + 3 H(+). It functions in the pathway tRNA modification; tRNA-queuosine biosynthesis. Its function is as follows. Catalyzes the NADPH-dependent reduction of 7-cyano-7-deazaguanine (preQ0) to 7-aminomethyl-7-deazaguanine (preQ1). In Chloroherpeton thalassium (strain ATCC 35110 / GB-78), this protein is NADPH-dependent 7-cyano-7-deazaguanine reductase.